Reading from the N-terminus, the 94-residue chain is Cyclin-dependent kinases regulatory subunit (94 aa).

It belongs to the CKS family. Forms a homohexamer that can probably bind six kinase subunits. Interacts with cdk-1.

It localises to the nucleus. Functionally, binds to the catalytic subunit of the cyclin dependent kinases and is essential for their biological function. Has a role in the exit from M phase during early mitotic cell division. More specifically, thought to act by degrading B-type cyclins that causes breakdown of nuclear envelope and exit mitosis. The chain is Cyclin-dependent kinases regulatory subunit (cks-1) from Caenorhabditis elegans.